The sequence spans 79 residues: MGFSTTHLLIFLVIIIVIFGTKKLRNIGSDLGGAVKGFKDGMKEGSDKAADAPAAAPQQVASSATAAKETIDVEAKTKA.

The helical transmembrane segment at M1 to T21 threads the bilayer. Residues K43–S63 are disordered. Positions D51–S63 are enriched in low complexity.

This sequence belongs to the TatA/E family. The Tat system comprises two distinct complexes: a TatABC complex, containing multiple copies of TatA, TatB and TatC subunits, and a separate TatA complex, containing only TatA subunits. Substrates initially bind to the TatABC complex, which probably triggers association of the separate TatA complex to form the active translocon.

The protein resides in the cell inner membrane. In terms of biological role, part of the twin-arginine translocation (Tat) system that transports large folded proteins containing a characteristic twin-arginine motif in their signal peptide across membranes. TatA could form the protein-conducting channel of the Tat system. In Albidiferax ferrireducens (strain ATCC BAA-621 / DSM 15236 / T118) (Rhodoferax ferrireducens), this protein is Sec-independent protein translocase protein TatA.